The primary structure comprises 696 residues: MAREFKIEDYRNFGIMAHIDAGKTTTTERILYYTGKSHKIGEVHDGAATMDWMEQEQERGITITSAATTTFWKGRDEKLRRFNIIDTPGHVDFTIEVERSLRVLDGAIALLDANAGVEPQTETVWRQADKYHVPRMIFCNKMDKIGADFYRSVEMVKSRLGATAVVMQLPIGAESDFKGVIDLVEMKALIWRDETLGAAWDVVEIPAEFKEKAEEYREKLIEAAVEMDEGAMERYLEGEMPSIEEIRALVRKGTIEVKFFPMFCGSAFKNKGVQPLLDAVVDFLPSPIDIPAIKGVDAKTEEPIERHAEDSEPLSMLAFKIMNDPFVGSLTFCRIYSGVLKKGVSLENTVKGKRERIGRMLQMHANSREDIEEAYAGDIVALAGLKETTTGDTLCDPLKPVILERMEFPEPVIQIAIEPKTKGDQEKMGLALNRLAAEDPSFRVKTDEESGQTIIAGMGELHLDIIVDRMKREFKVEANIGAPQVAYRETITKTAEIDYTHKKQTGGSGQFARVKIVFEPNPDGEDFLFESKIVGGSVPKEYVPGVQKGIESVLSSGPIAGFPMLGVKATLVDGAYHDVDSSVLAFEIAARAAFREGAQKAGAQLLEPIMKVEVVTPEEYVGSVIGDLNSRRGQIQGQEARGVAVVVNAMVPLANMFKYVDNLRSMSQGRAQYTMQFDHYEPVPSAVAQEIQKKFA.

Residues 8–288 enclose the tr-type G domain; it reads EDYRNFGIMA…AVVDFLPSPI (281 aa). GTP contacts are provided by residues 17–24, 86–90, and 140–143; these read AHIDAGKT, DTPGH, and NKMD.

This sequence belongs to the TRAFAC class translation factor GTPase superfamily. Classic translation factor GTPase family. EF-G/EF-2 subfamily.

It is found in the cytoplasm. Catalyzes the GTP-dependent ribosomal translocation step during translation elongation. During this step, the ribosome changes from the pre-translocational (PRE) to the post-translocational (POST) state as the newly formed A-site-bound peptidyl-tRNA and P-site-bound deacylated tRNA move to the P and E sites, respectively. Catalyzes the coordinated movement of the two tRNA molecules, the mRNA and conformational changes in the ribosome. This chain is Elongation factor G, found in Chelativorans sp. (strain BNC1).